The sequence spans 357 residues: Probable leucine aminopeptidase MCYG_04170 (357 aa).

The N-terminal stretch at 1 to 15 (MKVLAALALSALALA) is a signal peptide. A glycan (N-linked (GlcNAc...) asparagine) is linked at asparagine 76. Residues histidine 167 and aspartate 185 each contribute to the Zn(2+) site. N-linked (GlcNAc...) asparagine glycosylation is present at asparagine 186. Residues glutamate 224 and aspartate 251 each contribute to the Zn(2+) site. Cysteine 291 and cysteine 295 are oxidised to a cystine. Histidine 324 contributes to the Zn(2+) binding site.

This sequence belongs to the peptidase M28 family. M28E subfamily. In terms of assembly, monomer. Zn(2+) is required as a cofactor.

The protein resides in the secreted. Functionally, probable extracellular aminopeptidase which contributes to pathogenicity. This is Probable leucine aminopeptidase MCYG_04170 from Arthroderma otae (strain ATCC MYA-4605 / CBS 113480) (Microsporum canis).